Reading from the N-terminus, the 74-residue chain is Large ribosomal subunit protein bL31 (74 aa).

C16, C18, C38, and C41 together coordinate Zn(2+).

The protein belongs to the bacterial ribosomal protein bL31 family. Type A subfamily. Part of the 50S ribosomal subunit. Zn(2+) serves as cofactor.

Its function is as follows. Binds the 23S rRNA. In Acinetobacter baumannii (strain AB307-0294), this protein is Large ribosomal subunit protein bL31.